The sequence spans 232 residues: tRNA-uridine aminocarboxypropyltransferase (232 aa).

Zn(2+) contacts are provided by C31, C34, C41, and C43. The DXTW signature appears at 137–140; sequence DGTW.

It belongs to the TDD superfamily. DTWD2 family. TapT subfamily. As to quaternary structure, monomer in solution.

The enzyme catalyses a uridine in tRNA + S-adenosyl-L-methionine = a 3-[(3S)-3-amino-3-carboxypropyl]uridine in tRNA + S-methyl-5'-thioadenosine + H(+). The catalysed reaction is uridine(47) in tRNA(Phe) + S-adenosyl-L-methionine = 3-[(3S)-3-amino-3-carboxypropyl]uridine(47) in tRNA(Phe) + S-methyl-5'-thioadenosine + H(+). With respect to regulation, the degree of the acp3U modification at U47 is dependent on the presence of the m7G modification at the preceding nucleotide G46. It also depends on medium conditions. Its function is as follows. Catalyzes the formation of 3-(3-amino-3-carboxypropyl)uridine (acp3U) at position 47 of tRNAs. Acp3U47 confers thermal stability on tRNA. In Escherichia coli (strain K12), this protein is tRNA-uridine aminocarboxypropyltransferase.